The primary structure comprises 318 residues: MSQSVINEAAISAPAETAAALSFKQGEKIVYENNKLHKRLCRQVGQAIGDFNMIEDGDKIMVCLSGGKDSYALLDILMTLRERAPIKFDIVAVNLDQKQPNFPEHILPAYLKQLDIPFHIENQDTYSIVKRLIPEGKTTCSLCSRLRRGILYRVADELGATKIALGHHRDDIMETFFLNMFFGAKIKGMPPKLQSDDGKHIVIRPLAYVKEADTERYAQIKNFPIIPCDLCGSQENLQRKQIKNMLREWEKKHPGRVDNIFSSLSTVVPSHLMDSNLFGFADLQATGVAMPNGDIAFDEEPCSTGSTISSVIPLRTED.

The short motif at 65-70 is the PP-loop motif element; the sequence is SGGKDS. The [4Fe-4S] cluster site is built by C140, C143, and C231.

Belongs to the TtcA family. As to quaternary structure, homodimer. The cofactor is Mg(2+). [4Fe-4S] cluster serves as cofactor.

It is found in the cytoplasm. The enzyme catalyses cytidine(32) in tRNA + S-sulfanyl-L-cysteinyl-[cysteine desulfurase] + AH2 + ATP = 2-thiocytidine(32) in tRNA + L-cysteinyl-[cysteine desulfurase] + A + AMP + diphosphate + H(+). It functions in the pathway tRNA modification. In terms of biological role, catalyzes the ATP-dependent 2-thiolation of cytidine in position 32 of tRNA, to form 2-thiocytidine (s(2)C32). The sulfur atoms are provided by the cysteine/cysteine desulfurase (IscS) system. The protein is tRNA-cytidine(32) 2-sulfurtransferase of Herminiimonas arsenicoxydans.